A 462-amino-acid chain; its full sequence is Glycine--tRNA ligase (462 aa).

Residues arginine 100 and glutamate 175 each contribute to the substrate site. ATP-binding positions include 207-209 (RNE), 217-222 (FRTREF), 291-292 (EL), and 335-338 (GADR). 222–226 (FEQME) lines the substrate pocket. Residue 331–335 (EPSLG) participates in substrate binding.

The protein belongs to the class-II aminoacyl-tRNA synthetase family. Homodimer.

The protein resides in the cytoplasm. The catalysed reaction is tRNA(Gly) + glycine + ATP = glycyl-tRNA(Gly) + AMP + diphosphate. In terms of biological role, catalyzes the attachment of glycine to tRNA(Gly). This Clostridium acetobutylicum (strain ATCC 824 / DSM 792 / JCM 1419 / IAM 19013 / LMG 5710 / NBRC 13948 / NRRL B-527 / VKM B-1787 / 2291 / W) protein is Glycine--tRNA ligase.